Reading from the N-terminus, the 194-residue chain is NADH-quinone oxidoreductase subunit B (194 aa).

Positions 1-26 are disordered; sequence MGLTPSATKPEIAQAPQGIVDPSTGR. Cys73, Cys74, Cys138, and Cys168 together coordinate [4Fe-4S] cluster.

This sequence belongs to the complex I 20 kDa subunit family. As to quaternary structure, NDH-1 is composed of 14 different subunits. Subunits NuoB, C, D, E, F, and G constitute the peripheral sector of the complex. It depends on [4Fe-4S] cluster as a cofactor.

Its subcellular location is the cell inner membrane. It carries out the reaction a quinone + NADH + 5 H(+)(in) = a quinol + NAD(+) + 4 H(+)(out). In terms of biological role, NDH-1 shuttles electrons from NADH, via FMN and iron-sulfur (Fe-S) centers, to quinones in the respiratory chain. The immediate electron acceptor for the enzyme in this species is believed to be ubiquinone. Couples the redox reaction to proton translocation (for every two electrons transferred, four hydrogen ions are translocated across the cytoplasmic membrane), and thus conserves the redox energy in a proton gradient. The chain is NADH-quinone oxidoreductase subunit B from Xanthobacter autotrophicus (strain ATCC BAA-1158 / Py2).